The sequence spans 469 residues: Biotin synthase (469 aa).

The Radical SAM core domain occupies 51 to 278 (MTVKVNYLVN…DKEIRMAGGR (228 aa)). Residues Cys-66, Cys-70, and Cys-73 each coordinate [4Fe-4S] cluster. [2Fe-2S] cluster is bound by residues Cys-110, Cys-143, Cys-203, and Arg-273. The disordered stretch occupies residues 326 to 469 (AGPDPSRDRH…GAGTSVAPNA (144 aa)). Composition is skewed to low complexity over residues 363-384 (GSAA…APAD) and 405-428 (AGGP…MSPA).

This sequence belongs to the radical SAM superfamily. Biotin synthase family. As to quaternary structure, homodimer. The cofactor is [4Fe-4S] cluster. Requires [2Fe-2S] cluster as cofactor.

The catalysed reaction is (4R,5S)-dethiobiotin + (sulfur carrier)-SH + 2 reduced [2Fe-2S]-[ferredoxin] + 2 S-adenosyl-L-methionine = (sulfur carrier)-H + biotin + 2 5'-deoxyadenosine + 2 L-methionine + 2 oxidized [2Fe-2S]-[ferredoxin]. It functions in the pathway cofactor biosynthesis; biotin biosynthesis; biotin from 7,8-diaminononanoate: step 2/2. Its function is as follows. Catalyzes the conversion of dethiobiotin (DTB) to biotin by the insertion of a sulfur atom into dethiobiotin via a radical-based mechanism. The polypeptide is Biotin synthase (Kocuria rhizophila (strain ATCC 9341 / DSM 348 / NBRC 103217 / DC2201)).